We begin with the raw amino-acid sequence, 583 residues long: Ankyrin repeat and SOCS box protein 15 (583 aa).

ANK repeat units lie at residues 75-104 (KGWFPLHEAVVQPIQQILETVLDASYKTLW), 110-139 (DGETPLTLAVKAGLVENVKTLLDKGVWPNT), 143-172 (KGETPLLIAIKRGSYDMVSALIKYNTSLDQ), 176-205 (KRWSAMHEAAKQGRKDIITLLLNHRGNVHL), 209-238 (FGVTPLGVAAEYGHCDVLEHLIHKGGDVFA), 242-271 (DGASVLFEAAGGGNPDCISLLLKYGGSGNV), 275-304 (AGHLPIHRAAYEGHYLALKYLIPVTSKHAI), 307-336 (SGLTPIHSAAEGQNAQCLELLIENGFDVNA), 349-378 (ERKTALYFAVSNNDIHCTEVLLAAGADPNL), 379-408 (DPLNCLLVAVRANRHEIVRLLLSYGANVNC), and 416-444 (TRFPSAIQYALNDEIMLRLLLNNGYQVEL). The region spanning 524-579 (WPEIRQIIENPCSLKHLCRLKIRRVMGLQRLCQPASIQMLPLPAAMRRYLLFKEFD) is the SOCS box domain.

The protein belongs to the ankyrin SOCS box (ASB) family.

It participates in protein modification; protein ubiquitination. In terms of biological role, may be a substrate-recognition component of a SCF-like ECS (Elongin-Cullin-SOCS-box protein) E3 ubiquitin-protein ligase complex which mediates the ubiquitination and subsequent proteasomal degradation of target proteins. The protein is Ankyrin repeat and SOCS box protein 15 (Asb15) of Mus musculus (Mouse).